Here is a 639-residue protein sequence, read N- to C-terminus: Chaperone protein DnaK (639 aa).

A Phosphothreonine; by autocatalysis modification is found at Thr-198. Positions 605–624 (SQAQGGAETNAGKQANAAAD) are disordered.

It belongs to the heat shock protein 70 family.

Its function is as follows. Acts as a chaperone. The protein is Chaperone protein DnaK of Shewanella putrefaciens (strain CN-32 / ATCC BAA-453).